The sequence spans 299 residues: DNA repair protein RecO (299 aa).

The tract at residues 1–62 is disordered; the sequence is MTLNSDADPD…GRRAPRTPAS (62 aa). Over residues 25-41 the composition is skewed to low complexity; it reads ASKPARSTRKSSSAKSA.

Belongs to the RecO family.

Its function is as follows. Involved in DNA repair and RecF pathway recombination. This is DNA repair protein RecO from Paraburkholderia xenovorans (strain LB400).